Here is a 109-residue protein sequence, read N- to C-terminus: Small ribosomal subunit protein bS20 (109 aa).

The segment at 1–26 (MANIKSAKKRAIQSEKRRKHNASRRS) is disordered.

The protein belongs to the bacterial ribosomal protein bS20 family.

Binds directly to 16S ribosomal RNA. The sequence is that of Small ribosomal subunit protein bS20 from Hamiltonella defensa subsp. Acyrthosiphon pisum (strain 5AT).